We begin with the raw amino-acid sequence, 1198 residues long: Phosphatidylinositol-3,5-bisphosphate 3-phosphatase MTMR3 (1198 aa).

Ser-8 is modified (phosphoserine). The Myotubularin phosphatase domain maps to 155–576 (EHVTSRFKNE…RNLMLWSAVY (422 aa)). Residues 265 to 280 (SRSSGSKLSTRNTSRD) show a composition bias toward polar residues. The interval 265 to 285 (SRSSGSKLSTRNTSRDFPNGG) is disordered. Positions 326, 351, and 352 each coordinate a 1,2-diacyl-sn-glycero-3-phospho-(1D-myo-inositol-3,5-bisphosphate). Residues Asn-326, Asn-351, and Ile-352 each contribute to the a 1,2-diacyl-sn-glycero-3-phospho-(1D-myo-inositol-3-phosphate) site. Catalysis depends on Cys-413, which acts as the Phosphocysteine intermediate. 8 residues coordinate a 1,2-diacyl-sn-glycero-3-phospho-(1D-myo-inositol-3,5-bisphosphate): Ser-414, Asp-415, Gly-416, Trp-417, Asp-418, Arg-419, Lys-455, and Arg-459. Residues Ser-414, Asp-415, Gly-416, Trp-417, Asp-418, and Arg-419 each contribute to the a 1,2-diacyl-sn-glycero-3-phospho-(1D-myo-inositol-3-phosphate) site. Arg-459 lines the a 1,2-diacyl-sn-glycero-3-phospho-(1D-myo-inositol-3-phosphate) pocket. Residues 590–612 (CAPYPAPGTSPDDPPLSRLPKTR) are disordered. The segment covering 593–603 (YPAPGTSPDDP) has biased composition (pro residues). A phosphoserine mark is found at Ser-613, Ser-633, Ser-647, and Ser-651. Disordered regions lie at residues 650–669 (LSSLAGPGEDPLSADSLGKP), 716–735 (EGKEDPLLEKESRRKTPEAS), and 855–891 (KSVSGPQGHHRSCLVNSGKDRLPQTMEPSPSETSLVE). Residues 716–732 (EGKEDPLLEKESRRKTP) show a composition bias toward basic and acidic residues. At Thr-731 the chain carries Phosphothreonine. Phosphoserine is present on residues Ser-906 and Ser-909. Disordered regions lie at residues 933–974 (ETEN…SRQL) and 993–1019 (WLHSHSGRPSATSSPDQPSRSHLDDDG). Residues 999-1010 (GRPSATSSPDQP) show a composition bias toward polar residues. The stretch at 1029–1062 (QRLRQIESGHQQEVETLKKQVQELKSRLESQYLT) forms a coiled coil. At Ser-1064 the chain carries Phosphoserine. The FYVE-type zinc finger occupies 1119-1179 (DHLAAHCYAC…VCKSCYSSLH (61 aa)). Residues Cys-1125, Cys-1128, Cys-1141, Cys-1144, Cys-1149, Cys-1152, Cys-1171, and Cys-1174 each coordinate Zn(2+).

This sequence belongs to the protein-tyrosine phosphatase family. Non-receptor class myotubularin subfamily. In terms of assembly, forms heterodimers with MTMR4 that recruit both CEP55 and PLK1; occurs during early mitosis, regulates the phosphorylation of CEP55 by PLK1 and its recruitment to the midbody where it mediates cell abscission. Post-translationally, phosphorylated by CDK1 during mitosis.

The protein resides in the cytoplasm. It is found in the cytosol. The protein localises to the membrane. The catalysed reaction is a 1,2-diacyl-sn-glycero-3-phospho-(1D-myo-inositol-3,5-bisphosphate) + H2O = a 1,2-diacyl-sn-glycero-3-phospho-(1D-myo-inositol-5-phosphate) + phosphate. It carries out the reaction a 1,2-diacyl-sn-glycero-3-phospho-(1D-myo-inositol-3-phosphate) + H2O = a 1,2-diacyl-sn-glycero-3-phospho-(1D-myo-inositol) + phosphate. It catalyses the reaction 1,2-dihexadecanoyl-sn-glycero-3-phospho-(1D-myo-inositol-3-phosphate) + H2O = 1,2-dihexadecanoyl-sn-glycero-3-phospho-(1D-myo-inositol) + phosphate. The enzyme catalyses 1,2-dioctanoyl-sn-glycero-3-phospho-(1-D-myo-inositol-3-phosphate) + H2O = 1,2-dioctanoyl-sn-glycero-3-phospho-(1D-myo-inositol) + phosphate. The catalysed reaction is 1,2-dihexadecanoyl-sn-glycero-3-phospho-(1D-myo-inositol-3,5-phosphate) + H2O = 1,2-dihexadecanoyl-sn-glycero-3-phospho-(1D-myo-inositol-5-phosphate) + phosphate. Lipid phosphatase that specifically dephosphorylates the D-3 position of phosphatidylinositol 3-phosphate and phosphatidylinositol 3,5-bisphosphate, generating phosphatidylinositol and phosphatidylinositol 5-phosphate. Decreases the levels of phosphatidylinositol 3-phosphate, a phospholipid found in cell membranes where it acts as key regulator of both cell signaling and intracellular membrane traffic. Could also have a molecular sequestering/adapter activity and regulate biological processes independently of its phosphatase activity. It includes the regulation of midbody abscission during mitotic cytokinesis. This is Phosphatidylinositol-3,5-bisphosphate 3-phosphatase MTMR3 from Homo sapiens (Human).